A 423-amino-acid polypeptide reads, in one-letter code: Transcription factor bHLH14 (423 aa).

The tract at residues 192–243 is disordered; that stretch reads GKTTKHTNQTGSYPKPAVSDHSKSGNQQFGSERKRRRKLETTRVAAATKEKH. The region spanning 245-294 is the bHLH domain; that stretch reads PAVLSHVEAEKQRREKLNHRFYALRAIVPKVSRMDKASLLSDAVSYIESL. Positions 312-343 are disordered; that stretch reads ETDKLDNSSSNTSPSSVEYQVNQKPSKSNRGS. Over residues 318–327 the composition is skewed to low complexity; that stretch reads NSSSNTSPSS. Residues 328–342 are compositionally biased toward polar residues; the sequence is VEYQVNQKPSKSNRG.

In terms of assembly, homodimer.

It localises to the nucleus. In Arabidopsis thaliana (Mouse-ear cress), this protein is Transcription factor bHLH14 (BHLH14).